Here is a 230-residue protein sequence, read N- to C-terminus: Large ribosomal subunit protein uL1 (230 aa).

Belongs to the universal ribosomal protein uL1 family. Part of the 50S ribosomal subunit.

Binds directly to 23S rRNA. The L1 stalk is quite mobile in the ribosome, and is involved in E site tRNA release. Functionally, protein L1 is also a translational repressor protein, it controls the translation of the L11 operon by binding to its mRNA. In Bacillus mycoides (strain KBAB4) (Bacillus weihenstephanensis), this protein is Large ribosomal subunit protein uL1.